The sequence spans 448 residues: Glucose-6-phosphate isomerase (448 aa).

Glutamate 290 acts as the Proton donor in catalysis. Catalysis depends on residues histidine 311 and lysine 425.

The protein belongs to the GPI family.

The protein resides in the cytoplasm. It catalyses the reaction alpha-D-glucose 6-phosphate = beta-D-fructose 6-phosphate. The protein operates within carbohydrate biosynthesis; gluconeogenesis. It functions in the pathway carbohydrate degradation; glycolysis; D-glyceraldehyde 3-phosphate and glycerone phosphate from D-glucose: step 2/4. In terms of biological role, catalyzes the reversible isomerization of glucose-6-phosphate to fructose-6-phosphate. This is Glucose-6-phosphate isomerase from Oceanobacillus iheyensis (strain DSM 14371 / CIP 107618 / JCM 11309 / KCTC 3954 / HTE831).